The chain runs to 688 residues: TBC1 domain family member 25 (688 aa).

A disordered region spans residues 1–27; that stretch reads MATASGASDLSGSGAPPPGVGAQAAAA. Residue Ser140 is modified to Phosphoserine. Thr160 carries the post-translational modification Phosphothreonine. The Rab-GAP TBC domain maps to 228–434; that stretch reads GVEPSLRKVV…RMLEVTWSSL (207 aa). Ser506 is subject to Phosphoserine. Over residues 544-567 the composition is skewed to low complexity; it reads LNSPDPLLSSFSHPDSPSSSSPPS. The segment at 544-606 is disordered; the sequence is LNSPDPLLSS…LPPVPPMGLP (63 aa). Over residues 596-606 the composition is skewed to pro residues; that stretch reads SLPPVPPMGLP.

Interacts (via N-terminus) with MAP1LC3B, GABARAP and GABARAPL2.

The protein resides in the cytoplasm. The protein localises to the cytoplasmic vesicle. It localises to the autophagosome. Functionally, acts as a GTPase-activating protein specific for RAB33B. Involved in the regulation of autophagosome maturation, the process in which autophagosomes fuse with endosomes and lysosomes. The sequence is that of TBC1 domain family member 25 (TBC1D25) from Homo sapiens (Human).